Consider the following 533-residue polypeptide: Tyrosine ammonia-lyase (533 aa).

The active-site Proton donor/acceptor is Tyr-57. His-87 contacts substrate. The 5-imidazolinone (Ala-Gly) cross-link spans 146-148; it reads ASG. The residue at position 147 (Ser-147) is a 2,3-didehydroalanine (Ser). Residues Asn-200 and Arg-305 each coordinate substrate.

Belongs to the TAL/TAM family. Homotetramer; dimer of dimers. In terms of processing, contains an active site 4-methylidene-imidazol-5-one (MIO), which is formed autocatalytically by cyclization and dehydration of residues Ala-Ser-Gly.

The catalysed reaction is L-tyrosine = (E)-4-coumarate + NH4(+). The enzyme catalyses L-tyrosine = 3-amino-3-(4-hydroxyphenyl)propanoate. Functionally, has ammonia-lyase and, to a lesser extent, aminomutase activity. Catalyzes the rearrangement of L-tyrosine to R-beta-tyrosine and S-beta-tyrosine. Does not accept L-histidine or L-phenylalanine as substrates. The chain is Tyrosine ammonia-lyase from Cupriavidus metallidurans (strain ATCC 43123 / DSM 2839 / NBRC 102507 / CH34) (Ralstonia metallidurans).